Reading from the N-terminus, the 251-residue chain is Zwei Ig domain protein zig-3 (251 aa).

The signal sequence occupies residues 1–19 (MLLICISVLAAISAHPLSS). Ig-like C2-type domains follow at residues 42–144 (PSLK…AKIS) and 160–244 (PVIT…TFLY). Cystine bridges form between Cys-65–Cys-128 and Cys-181–Cys-228.

As to expression, expressed in PVT, AIM and ASI neurons, in vulva and weakly in body wall muscles.

The protein resides in the secreted. Functionally, required for maintaining axon position of PVQ and PVP neurons postembryonically in the ventral nerve cord (VNC) by preventing axons drifting into the opposite side of the VNC that could occur during body growth and movement. This is Zwei Ig domain protein zig-3 from Caenorhabditis elegans.